The primary structure comprises 99 residues: NADH-quinone oxidoreductase subunit K (99 aa).

Helical transmembrane passes span proline 3 to isoleucine 23, isoleucine 28 to phenylalanine 48, and valine 59 to isoleucine 79.

This sequence belongs to the complex I subunit 4L family. As to quaternary structure, NDH-1 is composed of 14 different subunits. Subunits NuoA, H, J, K, L, M, N constitute the membrane sector of the complex.

The protein localises to the cell membrane. The catalysed reaction is a quinone + NADH + 5 H(+)(in) = a quinol + NAD(+) + 4 H(+)(out). NDH-1 shuttles electrons from NADH, via FMN and iron-sulfur (Fe-S) centers, to quinones in the respiratory chain. The immediate electron acceptor for the enzyme in this species is believed to be a menaquinone. Couples the redox reaction to proton translocation (for every two electrons transferred, four hydrogen ions are translocated across the cytoplasmic membrane), and thus conserves the redox energy in a proton gradient. This Rhodococcus jostii (strain RHA1) protein is NADH-quinone oxidoreductase subunit K.